We begin with the raw amino-acid sequence, 217 residues long: Ribonuclease HII (217 aa).

In terms of domain architecture, RNase H type-2 spans 27–216 (SRVAGVDEAG…VKESIQEGVC (190 aa)). Asp-33, Glu-34, and Asp-126 together coordinate a divalent metal cation.

Belongs to the RNase HII family. Requires Mn(2+) as cofactor. It depends on Mg(2+) as a cofactor.

Its subcellular location is the cytoplasm. The enzyme catalyses Endonucleolytic cleavage to 5'-phosphomonoester.. Functionally, endonuclease that specifically degrades the RNA of RNA-DNA hybrids. The chain is Ribonuclease HII from Chlamydia trachomatis serovar A (strain ATCC VR-571B / DSM 19440 / HAR-13).